A 321-amino-acid chain; its full sequence is L-carnitine dehydrogenase (321 aa).

14–19 (GSGVIG) serves as a coordination point for NAD(+).

This sequence belongs to the 3-hydroxyacyl-CoA dehydrogenase family. L-carnitine dehydrogenase subfamily. As to quaternary structure, homodimer.

It is found in the cytoplasm. It carries out the reaction carnitine + NAD(+) = 3-dehydrocarnitine + NADH + H(+). The protein operates within amine and polyamine metabolism; carnitine metabolism. With respect to regulation, analogs of L-carnitine such as D-carnitine, glycine betaine and choline, are competitive inhibitors of L-carnitine oxidation. Its function is as follows. Catalyzes the NAD(+)-dependent oxidation of L-carnitine to 3-dehydrocarnitine. Is specific for L-carnitine and NAD(+) as substrates. D,L-3-hydroxybutyrate, L-lactate, ethanol, L-malate and D,L-isocitrate are not substrates. Is involved in a L-carnitine degradation pathway that allows P.aeruginosa to grow on L-carnitine as the sole source of carbon and nitrogen. This chain is L-carnitine dehydrogenase, found in Pseudomonas aeruginosa (strain ATCC 15692 / DSM 22644 / CIP 104116 / JCM 14847 / LMG 12228 / 1C / PRS 101 / PAO1).